A 220-amino-acid chain; its full sequence is Translation initiation factor 6 (220 aa).

The protein belongs to the eIF-6 family.

Its function is as follows. Binds to the 50S ribosomal subunit and prevents its association with the 30S ribosomal subunit to form the 70S initiation complex. The polypeptide is Translation initiation factor 6 (Pyrobaculum aerophilum (strain ATCC 51768 / DSM 7523 / JCM 9630 / CIP 104966 / NBRC 100827 / IM2)).